Consider the following 232-residue polypeptide: 6-hydroxymethyl-7,8-dihydropterin pyrophosphokinase (232 aa).

The protein belongs to the archaeal 6-HMPDK family. It depends on Mg(2+) as a cofactor.

It carries out the reaction 6-hydroxymethyl-7,8-dihydropterin + ATP = (7,8-dihydropterin-6-yl)methyl diphosphate + AMP + H(+). Its pathway is cofactor biosynthesis; 5,6,7,8-tetrahydromethanopterin biosynthesis. Functionally, catalyzes the transfer of diphosphate from ATP to 6-hydroxymethyl-7,8-dihydropterin (6-HMD), leading to 6-hydroxymethyl-7,8-dihydropterin diphosphate (6-HMDP). In Methanothermobacter thermautotrophicus (strain ATCC 29096 / DSM 1053 / JCM 10044 / NBRC 100330 / Delta H) (Methanobacterium thermoautotrophicum), this protein is 6-hydroxymethyl-7,8-dihydropterin pyrophosphokinase.